A 331-amino-acid polypeptide reads, in one-letter code: PTS-dependent dihydroxyacetone kinase 2, dihydroxyacetone-binding subunit DhaK (331 aa).

The 322-residue stretch at 7–328 (DGYEAVEEML…LDTPCDTPYF (322 aa)) folds into the DhaK domain. Dihydroxyacetone is bound by residues 55–58 (GSGH) and Asp111. The Proton acceptor role is filled by His58. The Tele-hemiaminal-histidine intermediate role is filled by His218.

Homodimer. The dihydroxyacetone kinase complex is composed of a homodimer of DhaM, a homodimer of DhaK and the subunit DhaL.

Its subcellular location is the cytoplasm. The catalysed reaction is dihydroxyacetone + phosphoenolpyruvate = dihydroxyacetone phosphate + pyruvate. It participates in polyol metabolism; glycerol degradation. Its function is as follows. Dihydroxyacetone binding subunit of the dihydroxyacetone kinase, which is responsible for the phosphoenolpyruvate (PEP)-dependent phosphorylation of dihydroxyacetone via a phosphoryl group transfer from DhaL-ATP. This chain is PTS-dependent dihydroxyacetone kinase 2, dihydroxyacetone-binding subunit DhaK, found in Listeria innocua serovar 6a (strain ATCC BAA-680 / CLIP 11262).